Reading from the N-terminus, the 254-residue chain is uncharacterized protein (254 aa).

Cys71 acts as the Acyl-thioester intermediate in catalysis. Catalysis depends on residues His110 and Asp125.

The protein belongs to the arylamine N-acetyltransferase family.

This is an uncharacterized protein from Bacillus subtilis (strain 168).